Reading from the N-terminus, the 127-residue chain is Holo-[acyl-carrier-protein] synthase (127 aa).

Residues D8 and E60 each contribute to the Mg(2+) site.

It belongs to the P-Pant transferase superfamily. AcpS family. Mg(2+) serves as cofactor.

It localises to the cytoplasm. It carries out the reaction apo-[ACP] + CoA = holo-[ACP] + adenosine 3',5'-bisphosphate + H(+). In terms of biological role, transfers the 4'-phosphopantetheine moiety from coenzyme A to a Ser of acyl-carrier-protein. The chain is Holo-[acyl-carrier-protein] synthase from Marinomonas sp. (strain MWYL1).